We begin with the raw amino-acid sequence, 733 residues long: Nuclear hormone receptor family member nhr-66 (733 aa).

Low complexity-rich tracts occupy residues 113 to 130 and 165 to 185; these read PAIPSSSSCSEPSTSQAS and QQNRQQHQQQQRQQQQAQQQN. Positions 113 to 190 are disordered; sequence PAIPSSSSCS…AQQQNSMARK (78 aa). The segment at residues 266 to 343 is a DNA-binding region (nuclear receptor); it reads VPACAICGTD…SGMDKNSVQH (78 aa). NR C4-type zinc fingers lie at residues 269–289 and 305–326; these read CAICGTDSTGIHFGVDACAAC and CNKGGKCTVVKDGSAGQKCRAC. Residues 361 to 396 form a disordered region; the sequence is PDAEFEPSAKVSTVSEPSTSSGPSGGFNQNVSSPAG. Over residues 371–382 the composition is skewed to low complexity; sequence VSTVSEPSTSSG. One can recognise an NR LBD domain in the interval 444–687; that stretch reads CLGDWFRKPS…ACFNQMLDVE (244 aa). The tract at residues 676–687 is AF-2; sequence ADACFNQMLDVE. Residues 691–733 are disordered; sequence VSPDGQKDSEAEQGPSPVSVPEAARGSYQDDDMPPVLEKNCDL.

It belongs to the nuclear hormone receptor family. In terms of assembly, interacts with nuclear hormone receptor nhr-49; the interaction is direct. In terms of tissue distribution, widely expressed, including in hypodermis, gut, muscle, and neuronal cells of the ventral nerve cord, head, and tail ganglia. Expressed in the head ganglion in several sensory and interneurons, including AVA.

It localises to the nucleus. Functionally, transcription factor. Binds to regulatory elements and regulates transcription of target genes, including the potassium channel accessory subunit mps-2. Negatively regulates transcription of mps-2, thereby modulating age-dependent memory decline. In concert with nuclear hormone receptor nhr-49, involved in regulating target genes with roles in sphingolipid breakdown and lipid remodeling. Plays a role in modulating mitochondrial morphology and function. This is Nuclear hormone receptor family member nhr-66 from Caenorhabditis elegans.